The chain runs to 1252 residues: Elongator complex protein 1 (1252 aa).

The interval 814–1252 is mediates dimerization; that stretch reads VDVNDLYNVA…MMDWQHEILQ (439 aa). S1094 is subject to Phosphoserine. Positions 1097-1116 are disordered; that stretch reads SSQYSGTSRRTGKTFRSSKN. A compositionally biased stretch (basic residues) spans 1106 to 1116; it reads RTGKTFRSSKN. Positions 1111–1129 are required for binding to tRNA; the sequence is FRSSKNRRKHERKLFSLKP.

Belongs to the ELP1/IKA1 family. In terms of assembly, homodimer. Component of the elongator complex composed of Elp1, Elp2, Elp3, Elp4, Elp5 and Elp6. The elongator complex associates with and stabilizes microtubules; efficient interaction requires the full complex.

It is found in the cytoplasm. The protein resides in the nucleus. Its subcellular location is the cytoskeleton. The protein localises to the spindle. The protein operates within tRNA modification; 5-methoxycarbonylmethyl-2-thiouridine-tRNA biosynthesis. Functionally, component of the elongator complex, which is required for multiple tRNA modifications, including mcm5U (5-methoxycarbonylmethyl uridine), mcm5s2U (5-methoxycarbonylmethyl-2-thiouridine), and ncm5U (5-carbamoylmethyl uridine). The elongator complex catalyzes formation of carboxymethyluridine in the wobble base at position 34 in tRNAs. ELP1 binds to tRNA, mediating interaction of the elongator complex with tRNA. Binding by the elongator complex stabilizes microtubules and promotes their growth. This induces central spindle asymmetry, promoting polarized signaling endosome trafficking during asymmetric cell division and cell fate assignation of sensory organ precursor cells. Involved in protein synthesis-dependent long-term memory formation, probably as part of the elongator complex. This chain is Elongator complex protein 1, found in Drosophila melanogaster (Fruit fly).